A 674-amino-acid polypeptide reads, in one-letter code: Probable protein phosphatase 2C 66 (674 aa).

A Phosphoserine modification is found at serine 125. 2 disordered regions span residues 153–175 (YSGPIESTKKTEKEKPKKIRKKP) and 202–247 (KSVI…KQSM). Residues 244-665 (KQSMNSVLDV…DDVSVIVISL (422 aa)) form the PPM-type phosphatase domain. The Mn(2+) site is built by aspartate 282 and glycine 283. Basic and acidic residues predominate over residues 373 to 384 (NNKTKSDNRCDQ). A disordered region spans residues 373–392 (NNKTKSDNRCDQKGSNSTTT). Residues aspartate 593 and aspartate 656 each contribute to the Mn(2+) site.

The protein belongs to the PP2C family. The cofactor is Mg(2+). It depends on Mn(2+) as a cofactor. Expressed at low level in seedlings, roots, leaves, stems, young inflorescences, flowers and siliques.

The protein localises to the nucleus. It carries out the reaction O-phospho-L-seryl-[protein] + H2O = L-seryl-[protein] + phosphate. The enzyme catalyses O-phospho-L-threonyl-[protein] + H2O = L-threonyl-[protein] + phosphate. This Arabidopsis thaliana (Mouse-ear cress) protein is Probable protein phosphatase 2C 66 (PLL2).